A 166-amino-acid chain; its full sequence is Cofilin-2 (166 aa).

The 150-residue stretch at 4–153 (GVTVNDEVIK…KDRSTLGEKL (150 aa)) folds into the ADF-H domain. A Phosphoserine modification is found at S24. Positions 30 to 34 (KKRKK) match the Nuclear localization signal motif.

The protein belongs to the actin-binding proteins ADF family. The phosphorylation of Ser-24 may prevent recognition of the nuclear localization signal. In terms of tissue distribution, widely distributed in various tissues.

It localises to the nucleus matrix. The protein resides in the cytoplasm. The protein localises to the cytoskeleton. Its function is as follows. Controls reversibly actin polymerization and depolymerization in a pH-sensitive manner. It has the ability to bind G- and F-actin in a 1:1 ratio of cofilin to actin. It is the major component of intranuclear and cytoplasmic actin rods. This chain is Cofilin-2 (CFL2), found in Gallus gallus (Chicken).